The primary structure comprises 601 residues: Potassium-transporting ATPase potassium-binding subunit (601 aa).

The next 12 helical transmembrane spans lie at 6-26 (IMLLVAFLGVLLALAYPLGLF), 65-85 (SYAIALLVFNTLGALFVYAVQ), 136-156 (ALTGQNFFSAATGIAVAFALI), 179-199 (LYILLPLAIVVSVALMGQGVI), 283-303 (FSNFIEMLAIFLIPAGLCFTF), 313-333 (GWAVLGAMTLIFVVMTSIVMT), 367-387 (FGISASALFTAVTTAASCGAV), 397-417 (MGGFVPLVLMQFGEVVFGGVG), 419-439 (GLYGMLIFAILSVFIAGLMIG), 458-478 (SIAILVTPTLVLVGTAIAVLV), 524-544 (MLAIAMWFGRFAMIVPILAIA), and 566-586 (LFVALLVGVVVLVGVLNYVPA).

It belongs to the KdpA family. As to quaternary structure, the system is composed of three essential subunits: KdpA, KdpB and KdpC.

It is found in the cell inner membrane. Functionally, part of the high-affinity ATP-driven potassium transport (or Kdp) system, which catalyzes the hydrolysis of ATP coupled with the electrogenic transport of potassium into the cytoplasm. This subunit binds the periplasmic potassium ions and delivers the ions to the membrane domain of KdpB through an intramembrane tunnel. The protein is Potassium-transporting ATPase potassium-binding subunit of Herminiimonas arsenicoxydans.